Consider the following 134-residue polypeptide: Cell division protein SepF (134 aa).

It belongs to the SepF family. In terms of assembly, homodimer. Interacts with FtsZ.

Its subcellular location is the cytoplasm. Cell division protein that is part of the divisome complex and is recruited early to the Z-ring. Probably stimulates Z-ring formation, perhaps through the cross-linking of FtsZ protofilaments. Its function overlaps with FtsA. The chain is Cell division protein SepF from Caldanaerobacter subterraneus subsp. tengcongensis (strain DSM 15242 / JCM 11007 / NBRC 100824 / MB4) (Thermoanaerobacter tengcongensis).